The primary structure comprises 137 residues: ATP synthase epsilon chain, chloroplastic (137 aa).

Belongs to the ATPase epsilon chain family. In terms of assembly, F-type ATPases have 2 components, CF(1) - the catalytic core - and CF(0) - the membrane proton channel. CF(1) has five subunits: alpha(3), beta(3), gamma(1), delta(1), epsilon(1). CF(0) has three main subunits: a, b and c.

Its subcellular location is the plastid. It localises to the chloroplast thylakoid membrane. Produces ATP from ADP in the presence of a proton gradient across the membrane. The chain is ATP synthase epsilon chain, chloroplastic from Pinus koraiensis (Korean pine).